We begin with the raw amino-acid sequence, 430 residues long: Adenylosuccinate synthetase (430 aa).

GTP-binding positions include 12 to 18 (GDEGKGK) and 40 to 42 (GHT). Asp13 (proton acceptor) is an active-site residue. Asp13 and Gly40 together coordinate Mg(2+). Residues 13 to 16 (DEGK), 38 to 41 (NAGH), Thr130, Arg144, Gln224, Thr239, and Arg303 contribute to the IMP site. His41 functions as the Proton donor in the catalytic mechanism. 299–305 (TVTGRKR) is a substrate binding site. Residues Arg305, 331–333 (KLD), and 413–415 (STS) each bind GTP.

This sequence belongs to the adenylosuccinate synthetase family. In terms of assembly, homodimer. The cofactor is Mg(2+).

The protein localises to the cytoplasm. It carries out the reaction IMP + L-aspartate + GTP = N(6)-(1,2-dicarboxyethyl)-AMP + GDP + phosphate + 2 H(+). The protein operates within purine metabolism; AMP biosynthesis via de novo pathway; AMP from IMP: step 1/2. Its function is as follows. Plays an important role in the de novo pathway of purine nucleotide biosynthesis. Catalyzes the first committed step in the biosynthesis of AMP from IMP. This is Adenylosuccinate synthetase from Methylorubrum extorquens (strain CM4 / NCIMB 13688) (Methylobacterium extorquens).